A 153-amino-acid polypeptide reads, in one-letter code: Pheromone-binding protein Gp-9 (153 aa).

The N-terminal stretch at 1 to 19 is a signal peptide; the sequence is MKTFVLHIFIFAFVAFASA. 3 cysteine pairs are disulfide-bonded: Cys37–Cys77, Cys73–Cys129, and Cys118–Cys138.

The protein belongs to the PBP/GOBP family. Homodimer.

Its subcellular location is the secreted. In terms of biological role, colony queen number, a major feature of social organization, is associated with worker genotype for Gp-9. Colonies are headed by either a single reproductive queen (monogyne form) or multiple queens (polygyne form). Differences in worker Gp-9 genotypes between social forms may cause differences in workers' abilities to recognize queens and regulate their numbers. This chain is Pheromone-binding protein Gp-9, found in Solenopsis amblychila (Desert fire ant).